The following is a 297-amino-acid chain: N-acetylmuramic acid 6-phosphate etherase (297 aa).

Positions 56–219 (AIEAFNKGGR…STISMIGIGK (164 aa)) constitute an SIS domain. Glutamate 84 acts as the Proton donor in catalysis. The active site involves glutamate 115.

It belongs to the GCKR-like family. MurNAc-6-P etherase subfamily. In terms of assembly, homodimer.

It carries out the reaction N-acetyl-D-muramate 6-phosphate + H2O = N-acetyl-D-glucosamine 6-phosphate + (R)-lactate. The protein operates within amino-sugar metabolism; N-acetylmuramate degradation. Specifically catalyzes the cleavage of the D-lactyl ether substituent of MurNAc 6-phosphate, producing GlcNAc 6-phosphate and D-lactate. The protein is N-acetylmuramic acid 6-phosphate etherase of Lactococcus lactis subsp. cremoris (strain MG1363).